A 134-amino-acid chain; its full sequence is Profilin-3 (134 aa).

A disulfide bridge connects residues Cys-13 and Cys-118. The Involved in PIP2 interaction motif lies at Ala-84–Thr-100. Phosphothreonine is present on Thr-114.

The protein belongs to the profilin family. As to quaternary structure, occurs in many kinds of cells as a complex with monomeric actin in a 1:1 ratio. Post-translationally, phosphorylated by MAP kinases.

It is found in the cytoplasm. Its subcellular location is the cytoskeleton. Its function is as follows. Binds to actin and affects the structure of the cytoskeleton. At high concentrations, profilin prevents the polymerization of actin, whereas it enhances it at low concentrations. This is Profilin-3 from Olea europaea (Common olive).